The chain runs to 252 residues: Ribosomal RNA small subunit methyltransferase J (252 aa).

S-adenosyl-L-methionine contacts are provided by residues 101–102 (RD), 117–118 (ER), 153–154 (SS), and aspartate 171.

This sequence belongs to the methyltransferase superfamily. RsmJ family.

The protein resides in the cytoplasm. It catalyses the reaction guanosine(1516) in 16S rRNA + S-adenosyl-L-methionine = N(2)-methylguanosine(1516) in 16S rRNA + S-adenosyl-L-homocysteine + H(+). Specifically methylates the guanosine in position 1516 of 16S rRNA. The polypeptide is Ribosomal RNA small subunit methyltransferase J (Salmonella choleraesuis (strain SC-B67)).